The following is a 533-amino-acid chain: Decreased expression in renal and prostate cancer protein (533 aa).

A compositionally biased stretch (basic and acidic residues) spans 1-12 (MKEPRIFPRERP). Disordered stretches follow at residues 1–31 (MKEP…GGPV), 67–164 (QNPS…PDPR), 177–259 (MRAG…RAGG), and 299–350 (ASGN…PNSA). S160 carries the post-translational modification Phosphoserine. A compositionally biased stretch (polar residues) spans 299 to 309 (ASGNMGTNPPT). The residue at position 368 (R368) is an Asymmetric dimethylarginine. At R396 the chain carries Omega-N-methylarginine. S432 carries the post-translational modification Phosphoserine.

It belongs to the DERPC family.

It is found in the nucleus. Its function is as follows. Potential tumor suppressor. This Mus musculus (Mouse) protein is Decreased expression in renal and prostate cancer protein.